The following is a 284-amino-acid chain: Shikimate dehydrogenase (NADP(+)) (284 aa).

Shikimate is bound by residues 20–22 (SIS) and S67. Catalysis depends on K71, which acts as the Proton acceptor. D83 provides a ligand contact to NADP(+). Shikimate contacts are provided by N92 and D107. NADP(+) is bound by residues 129–133 (GAGGA) and I227. Residue Y229 coordinates shikimate. Residue G250 participates in NADP(+) binding.

It belongs to the shikimate dehydrogenase family. As to quaternary structure, homodimer.

The enzyme catalyses shikimate + NADP(+) = 3-dehydroshikimate + NADPH + H(+). It functions in the pathway metabolic intermediate biosynthesis; chorismate biosynthesis; chorismate from D-erythrose 4-phosphate and phosphoenolpyruvate: step 4/7. Functionally, involved in the biosynthesis of the chorismate, which leads to the biosynthesis of aromatic amino acids. Catalyzes the reversible NADPH linked reduction of 3-dehydroshikimate (DHSA) to yield shikimate (SA). The chain is Shikimate dehydrogenase (NADP(+)) from Streptococcus pneumoniae serotype 2 (strain D39 / NCTC 7466).